Consider the following 310-residue polypeptide: Nodulation protein D 2 (310 aa).

The 58-residue stretch at 6–63 folds into the HTH lysR-type domain; that stretch reads LDLNLLVALDALMTERKLTAAARRVKLSQPAMSAAIARLRTYFGDELFSMQGRELIPT. Residues 23–42 constitute a DNA-binding region (H-T-H motif); sequence LTAAARRVKLSQPAMSAAIA.

Belongs to the LysR transcriptional regulatory family.

Its function is as follows. NodD regulates the expression of the nodABCFE genes which encode other nodulation proteins. NodD is also a negative regulator of its own expression. Binds flavonoids as inducers. The sequence is that of Nodulation protein D 2 (nodD2) from Rhizobium meliloti (strain 1021) (Ensifer meliloti).